The chain runs to 637 residues: ATP-dependent rRNA helicase SPB4 (637 aa).

Positions 14–42 match the Q motif motif; that stretch reads WDTLNPPLSEWIRDAVATMGFDQMTPVQA. The region spanning 45–247 is the Helicase ATP-binding domain; sequence LPHFMGNKDV…RVGLRNPVKI (203 aa). Residue 58-65 coordinates ATP; it reads AVTGSGKT. The DEAD box signature appears at 195–198; the sequence is DEAD. The Helicase C-terminal domain occupies 283–438; the sequence is ALAELLRQLP…TITTSEDDAA (156 aa). A coiled-coil region spans residues 524–631; it reads KEKTREQQRK…AAAKQEKDGE (108 aa). Composition is skewed to basic and acidic residues over residues 535-553, 563-576, 583-618, and 625-637; these read ALEEEKSGVKKQDKSEEFK, SAKHEKEDDRVERR, RDAEATSKMTDDEKVKQMELNDLIAEVRRQNREKAA, and KQEKDGEFKGFDD. The tract at residues 535–637 is disordered; the sequence is ALEEEKSGVK…KDGEFKGFDD (103 aa).

It belongs to the DEAD box helicase family. DDX55/SPB4 subfamily. Component of pre-60S ribosomal complexes.

It is found in the nucleus. It localises to the nucleolus. It catalyses the reaction ATP + H2O = ADP + phosphate + H(+). In terms of biological role, ATP-binding RNA helicase involved in the biogenesis of 60S ribosomal subunits. Binds 90S pre-ribosomal particles and dissociates from pre-60S ribosomal particles after processing of 27SB pre-rRNA. Required for the normal formation of 18S rRNA through the processing of pre-rRNAs at sites A0, A1 and A2, and the normal formation of 25S and 5.8S rRNAs through the processing of pre-rRNAs at sites C1 and C2. The polypeptide is ATP-dependent rRNA helicase SPB4 (Gibberella zeae (strain ATCC MYA-4620 / CBS 123657 / FGSC 9075 / NRRL 31084 / PH-1) (Wheat head blight fungus)).